A 989-amino-acid chain; its full sequence is ATP-dependent 6-phosphofructokinase subunit alpha (989 aa).

An N-terminal catalytic PFK domain 1 region spans residues 1–585 (MPEPSISDLS…SYENFLSVSK (585 aa)). Residues Gly-220, 283–284 (RC), and 313–316 (GDGS) each bind ATP. A Mg(2+)-binding site is contributed by Asp-314. Beta-D-fructose 6-phosphate contacts are provided by residues 359 to 361 (SID), Arg-396, 403 to 405 (MGR), Glu-460, Arg-487, and 493 to 496 (HVQR). The active-site Proton acceptor is Asp-361. The interval 586-599 (YDDGSYLVPESSRL) is interdomain linker. Positions 600 to 989 (NIAIIHVGAP…LSGRLSIRTT (390 aa)) are C-terminal regulatory PFK domain 2. Residues Arg-670, 727–731 (TVSNN), Arg-765, 772–774 (QGG), Glu-832, Arg-858, 864–867 (HVQQ), and Arg-963 contribute to the beta-D-fructose 2,6-bisphosphate site.

It belongs to the phosphofructokinase type A (PFKA) family. ATP-dependent PFK group I subfamily. Eukaryotic two domain clade 'E' sub-subfamily. Heterododecamer of 4 alpha, 4 beta and 4 gamma chains. Mg(2+) is required as a cofactor.

The protein resides in the cytoplasm. The enzyme catalyses beta-D-fructose 6-phosphate + ATP = beta-D-fructose 1,6-bisphosphate + ADP + H(+). It functions in the pathway carbohydrate degradation; glycolysis; D-glyceraldehyde 3-phosphate and glycerone phosphate from D-glucose: step 3/4. Its activity is regulated as follows. Allosterically activated by ADP, AMP, or fructose 2,6-bisphosphate, and allosterically inhibited by ATP or citrate. In terms of biological role, catalyzes the phosphorylation of D-fructose 6-phosphate to fructose 1,6-bisphosphate by ATP, the first committing step of glycolysis. The protein is ATP-dependent 6-phosphofructokinase subunit alpha (PFK1) of Komagataella pastoris (Yeast).